We begin with the raw amino-acid sequence, 292 residues long: Phosphatidylserine decarboxylase proenzyme (292 aa).

Catalysis depends on charge relay system; for autoendoproteolytic cleavage activity residues aspartate 92, histidine 149, and serine 255. Serine 255 acts as the Schiff-base intermediate with substrate; via pyruvic acid; for decarboxylase activity in catalysis. Serine 255 carries the pyruvic acid (Ser); by autocatalysis modification.

The protein belongs to the phosphatidylserine decarboxylase family. PSD-B subfamily. Prokaryotic type I sub-subfamily. In terms of assembly, heterodimer of a large membrane-associated beta subunit and a small pyruvoyl-containing alpha subunit. Pyruvate is required as a cofactor. In terms of processing, is synthesized initially as an inactive proenzyme. Formation of the active enzyme involves a self-maturation process in which the active site pyruvoyl group is generated from an internal serine residue via an autocatalytic post-translational modification. Two non-identical subunits are generated from the proenzyme in this reaction, and the pyruvate is formed at the N-terminus of the alpha chain, which is derived from the carboxyl end of the proenzyme. The autoendoproteolytic cleavage occurs by a canonical serine protease mechanism, in which the side chain hydroxyl group of the serine supplies its oxygen atom to form the C-terminus of the beta chain, while the remainder of the serine residue undergoes an oxidative deamination to produce ammonia and the pyruvoyl prosthetic group on the alpha chain. During this reaction, the Ser that is part of the protease active site of the proenzyme becomes the pyruvoyl prosthetic group, which constitutes an essential element of the active site of the mature decarboxylase.

Its subcellular location is the cell membrane. The enzyme catalyses a 1,2-diacyl-sn-glycero-3-phospho-L-serine + H(+) = a 1,2-diacyl-sn-glycero-3-phosphoethanolamine + CO2. Its pathway is phospholipid metabolism; phosphatidylethanolamine biosynthesis; phosphatidylethanolamine from CDP-diacylglycerol: step 2/2. In terms of biological role, catalyzes the formation of phosphatidylethanolamine (PtdEtn) from phosphatidylserine (PtdSer). This is Phosphatidylserine decarboxylase proenzyme from Idiomarina loihiensis (strain ATCC BAA-735 / DSM 15497 / L2-TR).